Here is a 72-residue protein sequence, read N- to C-terminus: MAKDDVIQMQGEVQENLPNATFRVKLENGHVVLGHISGKMRMHYIRILPGDKVTVELTPYDLSRARIVFRAK.

One can recognise an S1-like domain in the interval 1–72 (MAKDDVIQMQ…SRARIVFRAK (72 aa)).

This sequence belongs to the IF-1 family. As to quaternary structure, component of the 30S ribosomal translation pre-initiation complex which assembles on the 30S ribosome in the order IF-2 and IF-3, IF-1 and N-formylmethionyl-tRNA(fMet); mRNA recruitment can occur at any time during PIC assembly.

The protein localises to the cytoplasm. In terms of biological role, one of the essential components for the initiation of protein synthesis. Stabilizes the binding of IF-2 and IF-3 on the 30S subunit to which N-formylmethionyl-tRNA(fMet) subsequently binds. Helps modulate mRNA selection, yielding the 30S pre-initiation complex (PIC). Upon addition of the 50S ribosomal subunit IF-1, IF-2 and IF-3 are released leaving the mature 70S translation initiation complex. The sequence is that of Translation initiation factor IF-1 1 from Ralstonia nicotianae (strain ATCC BAA-1114 / GMI1000) (Ralstonia solanacearum).